Here is a 157-residue protein sequence, read N- to C-terminus: UPF0303 protein NT01EI_1570 (157 aa).

Belongs to the UPF0303 family.

This Edwardsiella ictaluri (strain 93-146) protein is UPF0303 protein NT01EI_1570.